Here is a 971-residue protein sequence, read N- to C-terminus: Valine--tRNA ligase (971 aa).

Positions 55–65 (PNVTGSLHMGH) match the 'HIGH' region motif. The short motif at 572-576 (KMSKS) is the 'KMSKS' region element. Lys575 is a binding site for ATP. Positions 906-933 (KAELGRLQKDLDKVQKQHDQIASKLANE) form a coiled coil.

It belongs to the class-I aminoacyl-tRNA synthetase family. ValS type 1 subfamily. In terms of assembly, monomer.

It is found in the cytoplasm. The catalysed reaction is tRNA(Val) + L-valine + ATP = L-valyl-tRNA(Val) + AMP + diphosphate. In terms of biological role, catalyzes the attachment of valine to tRNA(Val). As ValRS can inadvertently accommodate and process structurally similar amino acids such as threonine, to avoid such errors, it has a 'posttransfer' editing activity that hydrolyzes mischarged Thr-tRNA(Val) in a tRNA-dependent manner. This is Valine--tRNA ligase from Acinetobacter baylyi (strain ATCC 33305 / BD413 / ADP1).